We begin with the raw amino-acid sequence, 565 residues long: Oxygen-dependent choline dehydrogenase (565 aa).

6–35 (DYIIIGAGSAGNVLATRLTEDADVSVLLLE) is an FAD binding site. The Proton acceptor role is filled by His-475. Positions 541–565 (RSNAPYFVAGERPVRGQPQRAVSAA) are disordered.

It belongs to the GMC oxidoreductase family. The cofactor is FAD.

It carries out the reaction choline + A = betaine aldehyde + AH2. The enzyme catalyses betaine aldehyde + NAD(+) + H2O = glycine betaine + NADH + 2 H(+). Its pathway is amine and polyamine biosynthesis; betaine biosynthesis via choline pathway; betaine aldehyde from choline (cytochrome c reductase route): step 1/1. Its function is as follows. Involved in the biosynthesis of the osmoprotectant glycine betaine. Catalyzes the oxidation of choline to betaine aldehyde and betaine aldehyde to glycine betaine at the same rate. The sequence is that of Oxygen-dependent choline dehydrogenase from Ectopseudomonas mendocina (strain ymp) (Pseudomonas mendocina).